The chain runs to 403 residues: Argininosuccinate synthase (403 aa).

Residues 12–20 and alanine 39 contribute to the ATP site; that span reads AYSGGLDTS. Tyrosine 91 contributes to the L-citrulline binding site. Glycine 121 provides a ligand contact to ATP. Threonine 123, asparagine 127, and aspartate 128 together coordinate L-aspartate. Asparagine 127 contacts L-citrulline. Residues arginine 131, serine 180, serine 189, glutamate 265, and tyrosine 277 each contribute to the L-citrulline site.

Belongs to the argininosuccinate synthase family. Type 1 subfamily. As to quaternary structure, homotetramer.

Its subcellular location is the cytoplasm. It catalyses the reaction L-citrulline + L-aspartate + ATP = 2-(N(omega)-L-arginino)succinate + AMP + diphosphate + H(+). Its pathway is amino-acid biosynthesis; L-arginine biosynthesis; L-arginine from L-ornithine and carbamoyl phosphate: step 2/3. This Buchnera aphidicola subsp. Acyrthosiphon pisum (strain 5A) protein is Argininosuccinate synthase.